Reading from the N-terminus, the 245-residue chain is Ureidoacrylate amidohydrolase RutB (245 aa).

Catalysis depends on Asp41, which acts as the Proton acceptor. Lys150 is a catalytic residue. Residue Cys183 is the Nucleophile of the active site.

This sequence belongs to the isochorismatase family. RutB subfamily.

The enzyme catalyses (Z)-3-ureidoacrylate + H2O + H(+) = (Z)-3-aminoacrylate + NH4(+) + CO2. It catalyses the reaction (Z)-3-ureidoacrylate + H2O = (Z)-3-aminoacrylate + carbamate + H(+). It carries out the reaction (Z)-2-methylureidoacrylate + H2O + H(+) = (Z)-2-methylaminoacrylate + NH4(+) + CO2. In terms of biological role, hydrolyzes ureidoacrylate to form aminoacrylate and carbamate. The carbamate hydrolyzes spontaneously, thereby releasing one of the nitrogen atoms of the pyrimidine ring as ammonia and one of its carbon atoms as CO2. The protein is Ureidoacrylate amidohydrolase RutB of Pseudomonas syringae pv. syringae (strain B728a).